The following is a 273-amino-acid chain: Elongation factor Ts (273 aa).

Residues 79–82 (TDFV) form an involved in Mg(2+) ion dislocation from EF-Tu region.

It belongs to the EF-Ts family.

It localises to the cytoplasm. In terms of biological role, associates with the EF-Tu.GDP complex and induces the exchange of GDP to GTP. It remains bound to the aminoacyl-tRNA.EF-Tu.GTP complex up to the GTP hydrolysis stage on the ribosome. The sequence is that of Elongation factor Ts from Hydrogenobaculum sp. (strain Y04AAS1).